Consider the following 223-residue polypeptide: DNA mismatch repair protein MutH (223 aa).

This sequence belongs to the MutH family.

It is found in the cytoplasm. Sequence-specific endonuclease that cleaves unmethylated GATC sequences. It is involved in DNA mismatch repair. This Shewanella baltica (strain OS185) protein is DNA mismatch repair protein MutH.